The following is a 282-amino-acid chain: ATP phosphoribosyltransferase (282 aa).

It belongs to the ATP phosphoribosyltransferase family. Long subfamily. It depends on Mg(2+) as a cofactor.

The protein localises to the cytoplasm. The catalysed reaction is 1-(5-phospho-beta-D-ribosyl)-ATP + diphosphate = 5-phospho-alpha-D-ribose 1-diphosphate + ATP. It functions in the pathway amino-acid biosynthesis; L-histidine biosynthesis; L-histidine from 5-phospho-alpha-D-ribose 1-diphosphate: step 1/9. With respect to regulation, feedback inhibited by histidine. Catalyzes the condensation of ATP and 5-phosphoribose 1-diphosphate to form N'-(5'-phosphoribosyl)-ATP (PR-ATP). Has a crucial role in the pathway because the rate of histidine biosynthesis seems to be controlled primarily by regulation of HisG enzymatic activity. The polypeptide is ATP phosphoribosyltransferase (Saccharopolyspora erythraea (strain ATCC 11635 / DSM 40517 / JCM 4748 / NBRC 13426 / NCIMB 8594 / NRRL 2338)).